The following is a 310-amino-acid chain: UPF0324 membrane protein GSU2818 (310 aa).

The next 9 helical transmembrane spans lie at 11–33 (FTIL…VMGI), 53–72 (MLLQ…GEVI), 79–97 (IWYS…YGLG), 107–129 (SALI…APVL), 136–158 (TAVA…PLVG), 193–215 (ALAI…VMAA), 227–244 (IPLF…RTLL), 254–273 (LAGV…GAGL), and 286–308 (LVQA…KLPW).

The protein belongs to the UPF0324 family.

It localises to the cell membrane. This chain is UPF0324 membrane protein GSU2818, found in Geobacter sulfurreducens (strain ATCC 51573 / DSM 12127 / PCA).